The sequence spans 159 residues: Keratin-associated protein 9-8 (159 aa).

15 repeat units span residues C8–T12, C13–T17, C32–S36, C37–S41, C46–T50, C51–T55, C56–I60, C65–S69, C70–P74, C75–T79, C80–T84, C129–A133, C134–T138, C139–T142, and C153–S157. A 15 X 5 AA repeats of C-C-[RQVSGE]-[SPSNQ]-[TASPI] region spans residues C8–S157.

Belongs to the KRTAP type 9 family. Interacts with hair keratins.

In terms of biological role, in the hair cortex, hair keratin intermediate filaments are embedded in an interfilamentous matrix, consisting of hair keratin-associated proteins (KRTAP), which are essential for the formation of a rigid and resistant hair shaft through their extensive disulfide bond cross-linking with abundant cysteine residues of hair keratins. The matrix proteins include the high-sulfur and high-glycine-tyrosine keratins. This chain is Keratin-associated protein 9-8 (KRTAP9-8), found in Homo sapiens (Human).